Here is a 171-residue protein sequence, read N- to C-terminus: ATP synthase subunit b (171 aa).

Residues 26 to 48 (LINLAIIIGLLVYAGRGFLGNLL) traverse the membrane as a helical segment.

The protein belongs to the ATPase B chain family. As to quaternary structure, F-type ATPases have 2 components, F(1) - the catalytic core - and F(0) - the membrane proton channel. F(1) has five subunits: alpha(3), beta(3), gamma(1), delta(1), epsilon(1). F(0) has four main subunits: a(1), b(1), b'(1) and c(10-14). The alpha and beta chains form an alternating ring which encloses part of the gamma chain. F(1) is attached to F(0) by a central stalk formed by the gamma and epsilon chains, while a peripheral stalk is formed by the delta, b and b' chains.

It is found in the cellular thylakoid membrane. F(1)F(0) ATP synthase produces ATP from ADP in the presence of a proton or sodium gradient. F-type ATPases consist of two structural domains, F(1) containing the extramembraneous catalytic core and F(0) containing the membrane proton channel, linked together by a central stalk and a peripheral stalk. During catalysis, ATP synthesis in the catalytic domain of F(1) is coupled via a rotary mechanism of the central stalk subunits to proton translocation. In terms of biological role, component of the F(0) channel, it forms part of the peripheral stalk, linking F(1) to F(0). The protein is ATP synthase subunit b of Synechococcus elongatus (strain ATCC 33912 / PCC 7942 / FACHB-805) (Anacystis nidulans R2).